Consider the following 437-residue polypeptide: Sorting nexin-30 (437 aa).

2 disordered regions span residues 1 to 44 and 54 to 73; these read MAGG…PDLL and LILP…SSSS. The residue at position 38 (Thr38) is a Phosphothreonine. A Phosphoserine modification is found at Ser40. The segment covering 63 to 73 has biased composition (low complexity); that stretch reads AGTSSPASSSS. In terms of domain architecture, PX spans 89–210; it reads RDLFVIVDDP…IFLTAKDLNA (122 aa). Residues Arg132, Gln134, Lys162, and Arg176 each contribute to the a 1,2-diacyl-sn-glycero-3-phospho-(1D-myo-inositol-3-phosphate) site. The BAR domain occupies 234 to 437; the sequence is KLRTRPLEFA…PLLQEKQEAK (204 aa).

It belongs to the sorting nexin family. In terms of assembly, heterodimer; heterodimerizes with SNX4.

It localises to the early endosome membrane. Its function is as follows. Involved in the regulation of endocytosis and in several stages of intracellular trafficking. Together with SNX4, involved in autophagosome assembly. The polypeptide is Sorting nexin-30 (Homo sapiens (Human)).